The following is a 279-amino-acid chain: Urease accessory protein UreD (279 aa).

This sequence belongs to the UreD family. In terms of assembly, ureD, UreF and UreG form a complex that acts as a GTP-hydrolysis-dependent molecular chaperone, activating the urease apoprotein by helping to assemble the nickel containing metallocenter of UreC. The UreE protein probably delivers the nickel.

The protein resides in the cytoplasm. Required for maturation of urease via the functional incorporation of the urease nickel metallocenter. This Rhodopseudomonas palustris (strain HaA2) protein is Urease accessory protein UreD.